Here is a 420-residue protein sequence, read N- to C-terminus: Histidine--tRNA ligase (420 aa).

Belongs to the class-II aminoacyl-tRNA synthetase family. As to quaternary structure, homodimer.

It is found in the cytoplasm. It catalyses the reaction tRNA(His) + L-histidine + ATP = L-histidyl-tRNA(His) + AMP + diphosphate + H(+). The protein is Histidine--tRNA ligase (hisS) of Mycoplasmopsis pulmonis (strain UAB CTIP) (Mycoplasma pulmonis).